Here is a 306-residue protein sequence, read N- to C-terminus: Enoyl-CoA isomerase/hydratase MYCGRDRAFT_76805 (306 aa).

Substrate is bound by residues 103-107 (AGADL) and G150.

It belongs to the enoyl-CoA hydratase/isomerase family.

It carries out the reaction a (3S)-3-hydroxyacyl-CoA = a (2E)-enoyl-CoA + H2O. The enzyme catalyses a 4-saturated-(3S)-3-hydroxyacyl-CoA = a (3E)-enoyl-CoA + H2O. It participates in siderophore biosynthesis. In terms of biological role, enoyl-CoA isomerase/hydratase involved in the biosynthesis of a ferrichrome A-like siderophore which may contribute to organismal virulence. The first step of siderophore biosynthesis is performed by the HMG-CoA synthase (HMGS) MYCGRDRAFT_54740 which catalyzes the generation of HMG-CoA and CoA using acetoacetyl-CoA and acetyl-CoA as substrates. The enoyl-CoA isomerase/hydratase MYCGRDRAFT_76805 then catalyzes the conversion of HMG-CoA to methylglutaconyl-CoA. The acyltransferase MYCGRDRAFT_85486 then fuses methylglutaconyl-CoA with hydroxyornithine to yield methylglutaconyl hydroxyornithine. Methylglutaconyl hydroxyornithine is then available for use by the nonribosomal peptide synthetase NRPS2 to generate the ferrichrome A-like siderophore. This Zymoseptoria tritici (strain CBS 115943 / IPO323) (Speckled leaf blotch fungus) protein is Enoyl-CoA isomerase/hydratase MYCGRDRAFT_76805.